We begin with the raw amino-acid sequence, 175 residues long: CDP-archaeol synthase (175 aa).

The next 4 membrane-spanning stretches (helical) occupy residues 41-61, 82-102, 122-142, and 150-170; these read GLFSGIFCGFIAGCIEIWLSS, LIVVLALASGALFGDMFKSFF, FVVGAWVFTYLVAPEWFVSNF, and VIIITPLLHLTTNIIGYLIGV.

Belongs to the CDP-archaeol synthase family. It depends on Mg(2+) as a cofactor.

It localises to the cell membrane. The catalysed reaction is 2,3-bis-O-(geranylgeranyl)-sn-glycerol 1-phosphate + CTP + H(+) = CDP-2,3-bis-O-(geranylgeranyl)-sn-glycerol + diphosphate. The protein operates within membrane lipid metabolism; glycerophospholipid metabolism. Functionally, catalyzes the formation of CDP-2,3-bis-(O-geranylgeranyl)-sn-glycerol (CDP-archaeol) from 2,3-bis-(O-geranylgeranyl)-sn-glycerol 1-phosphate (DGGGP) and CTP. This reaction is the third ether-bond-formation step in the biosynthesis of archaeal membrane lipids. The protein is CDP-archaeol synthase of Methanosarcina barkeri (strain Fusaro / DSM 804).